The primary structure comprises 531 residues: Cation transporter HKT1;3 (531 aa).

The Cytoplasmic segment spans residues 1–46 (MNHCLVVSHKKLQTFRTFAASKFSSFTKSAQKSIKYSFQFIYQNNP). 2 helical membrane passes run 47 to 67 (LFVHVAYFALISFAGYGSLKV) and 108 to 128 (LWVLTILMLIGGEVFTSMLGI). Residues 129–190 (HFMRAEFGTK…GGHVEPKTIK (62 aa)) lie on the Cytoplasmic side of the membrane. 2 helical membrane-spanning segments follow: residues 191–211 (FLGFVVMGYLLITNLGGSLLI) and 264–284 (ILLLLILPQILAGNTLFAPCL). Residues 285–321 (RLMVWSLEKITGKKDCRYILEYPKAIGYKHLMSTRES) are Cytoplasmic-facing. Helical transmembrane passes span 322-342 (VYLTLTVVSLIILQTVLFLSL) and 383-403 (SAILVLYTIMMYLPGYTSFLP). The Cytoplasmic segment spans residues 404 to 421 (RHDGEDSKTEKINKRKGL). Helical transmembrane passes span 422-442 (LENWIFSHMSYLAIFVMLICI) and 494-514 (YGFAGKWSDNGKAILIIVMLF). At 515–530 (GRLKTFNMKGGRAWKL) the chain is on the cytoplasmic side.

It belongs to the TrkH potassium transport family. HKT (TC 2.A.38.3) subfamily. Interacts with CNIH1. Weakly expressed. In roots, expressed in epidermis, exodermis, cortex, and sieve elements and companion cells of phloem. In mature leaves, expressed in large highly vacuolated cells of the adaxial epidermis, phloem and xylem.

Its subcellular location is the endoplasmic reticulum membrane. It is found in the golgi apparatus membrane. It carries out the reaction Na(+)(in) = Na(+)(out). Its function is as follows. Functions as a highly-selective sodium transporter. Does not seem to function as sodium-potassium cotransporter. May be involved in turgor changes for rolling and unrolling of leaves in response to environmental variations. The chain is Cation transporter HKT1;3 from Oryza sativa subsp. japonica (Rice).